The sequence spans 312 residues: Ribonuclease Z (312 aa).

The Zn(2+) site is built by His62, His64, Asp66, His67, His144, Asp215, and His273. Asp66 acts as the Proton acceptor in catalysis.

It belongs to the RNase Z family. Homodimer. The cofactor is Zn(2+).

It carries out the reaction Endonucleolytic cleavage of RNA, removing extra 3' nucleotides from tRNA precursor, generating 3' termini of tRNAs. A 3'-hydroxy group is left at the tRNA terminus and a 5'-phosphoryl group is left at the trailer molecule.. Its function is as follows. Zinc phosphodiesterase, which displays some tRNA 3'-processing endonuclease activity. Probably involved in tRNA maturation, by removing a 3'-trailer from precursor tRNA. This Prochlorococcus marinus (strain AS9601) protein is Ribonuclease Z.